The chain runs to 287 residues: ATP synthase gamma chain (287 aa).

The protein belongs to the ATPase gamma chain family. In terms of assembly, F-type ATPases have 2 components, CF(1) - the catalytic core - and CF(0) - the membrane proton channel. CF(1) has five subunits: alpha(3), beta(3), gamma(1), delta(1), epsilon(1). CF(0) has three main subunits: a, b and c.

It is found in the cell inner membrane. In terms of biological role, produces ATP from ADP in the presence of a proton gradient across the membrane. The gamma chain is believed to be important in regulating ATPase activity and the flow of protons through the CF(0) complex. In Stenotrophomonas maltophilia (strain R551-3), this protein is ATP synthase gamma chain.